We begin with the raw amino-acid sequence, 280 residues long: Dolichyl-diphosphooligosaccharide--protein glycosyltransferase subunit 2 (280 aa).

A signal peptide spans 1-16 (MKLLLVLLTIASVALA). The Lumenal portion of the chain corresponds to 17 to 187 (AVDDVAVNNF…FRQPEKRPSA (171 aa)). A helical membrane pass occupies residues 188–208 (LISDLFTIICLSPLLILVVLW). At 209 to 222 (SQVGINFQNAPASP) the chain is on the cytoplasmic side. A helical membrane pass occupies residues 223–243 (WVPIFHVGLIGIFGIYFMFWV). Glutamine 244 is a topological domain (lumenal). A helical membrane pass occupies residues 245-265 (FDMFVTLKYLAVLGFLTFVAG). Over 266–280 (NRVLRAISESKQKSE) the chain is Cytoplasmic.

This sequence belongs to the SWP1 family. Component of the oligosaccharyltransferase (OST) complex.

Its subcellular location is the endoplasmic reticulum membrane. It functions in the pathway protein modification; protein glycosylation. In terms of biological role, subunit of the oligosaccharyl transferase (OST) complex that catalyzes the initial transfer of a defined glycan (Glc(3)Man(9)GlcNAc(2) in eukaryotes) from the lipid carrier dolichol-pyrophosphate to an asparagine residue within an Asn-X-Ser/Thr consensus motif in nascent polypeptide chains, the first step in protein N-glycosylation. N-glycosylation occurs cotranslationally and the complex associates with the Sec61 complex at the channel-forming translocon complex that mediates protein translocation across the endoplasmic reticulum (ER). All subunits are required for a maximal enzyme activity. The sequence is that of Dolichyl-diphosphooligosaccharide--protein glycosyltransferase subunit 2 from Caenorhabditis elegans.